Reading from the N-terminus, the 65-residue chain is Trypsin inhibitor 1 (65 aa).

Cystine bridges form between C39–C56, C46–C58, and C52–C64.

It belongs to the protease inhibitor I7 (squash-type serine protease inhibitor) family.

The protein resides in the secreted. In terms of biological role, inhibits trypsin. This is Trypsin inhibitor 1 from Trichosanthes kirilowii (Chinese snake gourd).